A 460-amino-acid polypeptide reads, in one-letter code: Ribosomal protein uS12 methylthiotransferase RimO (460 aa).

Positions 16–130 (NKIHFISLGC…ILSAIESKEA (115 aa)) constitute an MTTase N-terminal domain. [4Fe-4S] cluster is bound by residues Cys-25, Cys-61, Cys-93, Cys-164, Cys-168, and Cys-171. Residues 150 to 382 (STPKHYAYLK…SQTQKKNVEK (233 aa)) form the Radical SAM core domain. Residues 385–455 (KQLVGQIVEA…GYDLVGRVIK (71 aa)) enclose the TRAM domain.

This sequence belongs to the methylthiotransferase family. RimO subfamily. The cofactor is [4Fe-4S] cluster.

The protein resides in the cytoplasm. It catalyses the reaction L-aspartate(89)-[ribosomal protein uS12]-hydrogen + (sulfur carrier)-SH + AH2 + 2 S-adenosyl-L-methionine = 3-methylsulfanyl-L-aspartate(89)-[ribosomal protein uS12]-hydrogen + (sulfur carrier)-H + 5'-deoxyadenosine + L-methionine + A + S-adenosyl-L-homocysteine + 2 H(+). Functionally, catalyzes the methylthiolation of an aspartic acid residue of ribosomal protein uS12. The polypeptide is Ribosomal protein uS12 methylthiotransferase RimO (Chlamydia caviae (strain ATCC VR-813 / DSM 19441 / 03DC25 / GPIC) (Chlamydophila caviae)).